The primary structure comprises 301 residues: GTPase Era (301 aa).

The Era-type G domain occupies 7–173 (KSGFVALLGR…LNTINKYLPE (167 aa)). The G1 stretch occupies residues 15-22 (GRPNVGKS). 15–22 (GRPNVGKS) contributes to the GTP binding site. Residues 41-45 (QTTRN) are G2. Positions 62–65 (DTPG) are G3. GTP-binding positions include 62-66 (DTPGI) and 123-126 (NKVD). The G4 stretch occupies residues 123–126 (NKVD). A G5 region spans residues 152-154 (ISA). Residues 204-281 (TSQEVPHATA…NLRLWVKVQH (78 aa)) enclose the KH type-2 domain.

It belongs to the TRAFAC class TrmE-Era-EngA-EngB-Septin-like GTPase superfamily. Era GTPase family. As to quaternary structure, monomer.

It is found in the cytoplasm. The protein resides in the cell membrane. An essential GTPase that binds both GDP and GTP, with rapid nucleotide exchange. Plays a role in 16S rRNA processing and 30S ribosomal subunit biogenesis and possibly also in cell cycle regulation and energy metabolism. The sequence is that of GTPase Era from Lactobacillus helveticus (strain DPC 4571).